The chain runs to 201 residues: ATP-dependent Clp protease proteolytic subunit (201 aa).

Catalysis depends on serine 101, which acts as the Nucleophile. Histidine 126 is an active-site residue.

The protein belongs to the peptidase S14 family. As to quaternary structure, fourteen ClpP subunits assemble into 2 heptameric rings which stack back to back to give a disk-like structure with a central cavity, resembling the structure of eukaryotic proteasomes.

The protein localises to the cytoplasm. The catalysed reaction is Hydrolysis of proteins to small peptides in the presence of ATP and magnesium. alpha-casein is the usual test substrate. In the absence of ATP, only oligopeptides shorter than five residues are hydrolyzed (such as succinyl-Leu-Tyr-|-NHMec, and Leu-Tyr-Leu-|-Tyr-Trp, in which cleavage of the -Tyr-|-Leu- and -Tyr-|-Trp bonds also occurs).. In terms of biological role, cleaves peptides in various proteins in a process that requires ATP hydrolysis. Has a chymotrypsin-like activity. Plays a major role in the degradation of misfolded proteins. This Francisella philomiragia subsp. philomiragia (strain ATCC 25017 / CCUG 19701 / FSC 153 / O#319-036) protein is ATP-dependent Clp protease proteolytic subunit.